A 279-amino-acid chain; its full sequence is Large ribosomal subunit protein mL46 (279 aa).

N6-acetyllysine is present on K230.

Belongs to the mitochondrion-specific ribosomal protein mL46 family. As to quaternary structure, component of the mitochondrial large ribosomal subunit (mt-LSU). Mature mammalian 55S mitochondrial ribosomes consist of a small (28S) and a large (39S) subunit. The 28S small subunit contains a 12S ribosomal RNA (12S mt-rRNA) and 30 different proteins. The 39S large subunit contains a 16S rRNA (16S mt-rRNA), a copy of mitochondrial valine transfer RNA (mt-tRNA(Val)), which plays an integral structural role, and 52 different proteins. mL46 is located at the central protuberance.

Its subcellular location is the mitochondrion. The chain is Large ribosomal subunit protein mL46 (MRPL46) from Homo sapiens (Human).